Here is a 522-residue protein sequence, read N- to C-terminus: Putative thymidine phosphorylase (522 aa).

The protein belongs to the thymidine/pyrimidine-nucleoside phosphorylase family. Type 2 subfamily.

It catalyses the reaction thymidine + phosphate = 2-deoxy-alpha-D-ribose 1-phosphate + thymine. This is Putative thymidine phosphorylase from Albidiferax ferrireducens (strain ATCC BAA-621 / DSM 15236 / T118) (Rhodoferax ferrireducens).